A 354-amino-acid polypeptide reads, in one-letter code: DNA integrity scanning protein DisA (354 aa).

The region spanning 6–144 (DDELKKILKI…GDIKYVLRDS (139 aa)) is the DAC domain. ATP is bound by residues Gly-73, Leu-91, and 104 to 108 (TRHRT).

It belongs to the DisA family. Homooctamer. Mg(2+) is required as a cofactor.

It catalyses the reaction 2 ATP = 3',3'-c-di-AMP + 2 diphosphate. Participates in a DNA-damage check-point that is active prior to asymmetric division when DNA is damaged. DisA forms globular foci that rapidly scan along the chromosomes during sporulation, searching for lesions. When a lesion is present, DisA pauses at the lesion site. This triggers a cellular response that culminates in a temporary block in sporulation initiation. Functionally, also has diadenylate cyclase activity, catalyzing the condensation of 2 ATP molecules into cyclic di-AMP (c-di-AMP). c-di-AMP acts as a signaling molecule that couples DNA integrity with progression of sporulation. The rise in c-di-AMP level generated by DisA while scanning the chromosome, operates as a positive signal that advances sporulation; upon encountering a lesion, the DisA focus arrests at the damaged site and halts c-di-AMP synthesis. In Clostridium perfringens (strain SM101 / Type A), this protein is DNA integrity scanning protein DisA.